Here is a 186-residue protein sequence, read N- to C-terminus: MRPQLRGNQRNRIRWWQHNSKKCNQTEKWHNVDWIHYEYPTHKMCELGNYHQTTPRHDICFDCNDTSLTIYNLTTRNAGKYTRHHRDNGQEENYYVTVLIGDTTLSTLGTCPVRYKESRNTENTIGSNIIKTIEKANIPLGIHAVWAGVVVSVALIALYMGSHRIPKKPHYTKLPKYDPDEFWTKA.

Residues Asn-24, Asn-64, and Asn-72 are each glycosylated (N-linked (GlcNAc...) asparagine; by host). A helical transmembrane segment spans residues 143-163 (HAVWAGVVVSVALIALYMGSH).

The protein belongs to the RL11 family.

It localises to the virion membrane. The protein is Protein TRL14 of Human cytomegalovirus (strain AD169) (HHV-5).